A 62-amino-acid chain; its full sequence is Large ribosomal subunit protein bL32 (62 aa).

Positions 1-20 (MAVPARHTSKQKKRSRRGHI) are disordered. Basic residues predominate over residues 7–20 (HTSKQKKRSRRGHI).

This sequence belongs to the bacterial ribosomal protein bL32 family.

This is Large ribosomal subunit protein bL32 from Lactobacillus acidophilus (strain ATCC 700396 / NCK56 / N2 / NCFM).